Consider the following 413-residue polypeptide: uncharacterized protein (413 aa).

Residue Lys-265 is modified to N6-(pyridoxal phosphate)lysine.

It belongs to the threonine aldolase family. Requires pyridoxal 5'-phosphate as cofactor.

This is an uncharacterized protein from Caenorhabditis elegans.